The sequence spans 2062 residues: Ankyrin repeat domain-containing protein 12 (2062 aa).

Disordered stretches follow at residues 1-119 and 145-188; these read MPKS…GNKK and ARDN…GETP. Residues 9 to 20 are compositionally biased toward polar residues; the sequence is PIQSENSDSDSN. Basic and acidic residues-rich tracts occupy residues 41–57 and 100–117; these read PKIE…EKSS and YSEK…EAGN. The segment covering 145–172 has biased composition (polar residues); the sequence is ARDNSPDSTPNHPSQTTPAQKKTPSSSS. Serine 149 is modified (phosphoserine). The span at 173–187 shows a compositional bias: basic and acidic residues; sequence RQKDKVNKRNERGET. ANK repeat units lie at residues 184-213, 217-246, and 250-280; these read RGET…NVNV, AGWT…DVNT, and DDDT…PFQA. Disordered stretches follow at residues 301–338, 409–501, 538–577, 609–683, 727–788, 812–1073, 1097–1227, and 1328–1350; these read KREV…TEKD, KSFK…TRIT, ISTG…MSLQ, QKDF…DSAK, EKNI…FTSL, EKHI…LVND, KHKE…RPPV, and EESN…KPEV. Residues 306–318 are compositionally biased toward acidic residues; it reads LSDDDESYTDSEE. 2 stretches are compositionally biased toward polar residues: residues 319–328 and 437–454; these read AQSVNPSSVD and KKIS…NSDM. Residues 455 to 467 show a composition bias toward basic and acidic residues; it reads QTKKEYVVSGEHK. The span at 468 to 480 shows a compositional bias: basic residues; that stretch reads QKGKVKRKLKNQN. The segment covering 481-498 has biased composition (basic and acidic residues); the sequence is KNKENQELKQEKEGKENT. Position 543 is a phosphoserine (serine 543). Residues 565 to 575 are compositionally biased toward polar residues; that stretch reads TCLSPGSSEMS. Composition is skewed to basic and acidic residues over residues 609–631, 639–649, 658–683, 727–784, 812–969, 977–1037, 1061–1072, and 1103–1157; these read QKDF…DHSP, TLKKMDKEGKT, KERE…DSAK, EKNI…KDSE, EKHI…DKES, HIQE…KDKI, KDTRPKEKRLVN, and KQKE…KQPK. Serine 630 bears the Phosphoserine mark. Residue serine 861 is modified to Phosphoserine. A compositionally biased stretch (polar residues) spans 1161-1189; the sequence is SNRSQSVDTKNVMTLGKSSFVSDNSLNRS. The span at 1200 to 1213 shows a compositional bias: low complexity; it reads SSRSVSMISVASSE. The span at 1328 to 1344 shows a compositional bias: polar residues; the sequence is EESNQGSLLTVPGDTSP. Serine 1401 carries the post-translational modification Phosphoserine. Disordered stretches follow at residues 1721-1744 and 1756-1795; these read NAED…NTMA and LLSE…VPQP. Over residues 1729–1744 the composition is skewed to polar residues; the sequence is NQIPQRMTRNKANTMA.

In terms of assembly, interacts with the PAS region of the p160 coactivators.

It is found in the nucleus. May recruit HDACs to the p160 coactivators/nuclear receptor complex to inhibit ligand-dependent transactivation. The sequence is that of Ankyrin repeat domain-containing protein 12 (ANKRD12) from Homo sapiens (Human).